Here is a 191-residue protein sequence, read N- to C-terminus: Phosphopantetheine adenylyltransferase (191 aa).

Ser-8 serves as a coordination point for substrate. Residues Ser-8–Phe-9 and His-16 contribute to the ATP site. Substrate contacts are provided by Lys-40, Thr-72, and Arg-86. Residues Gly-87 to Arg-89, Glu-97, and Tyr-122 to Ser-128 each bind ATP.

Belongs to the bacterial CoaD family. As to quaternary structure, homohexamer. Mg(2+) serves as cofactor.

It is found in the cytoplasm. The catalysed reaction is (R)-4'-phosphopantetheine + ATP + H(+) = 3'-dephospho-CoA + diphosphate. The protein operates within cofactor biosynthesis; coenzyme A biosynthesis; CoA from (R)-pantothenate: step 4/5. In terms of biological role, reversibly transfers an adenylyl group from ATP to 4'-phosphopantetheine, yielding dephospho-CoA (dPCoA) and pyrophosphate. The sequence is that of Phosphopantetheine adenylyltransferase from Nostoc sp. (strain PCC 7120 / SAG 25.82 / UTEX 2576).